The chain runs to 331 residues: ESX-3 secretion system protein EccE3 (331 aa).

Helical transmembrane passes span 11-31 (GRVTLVLLAVVPVALAYPWQS) and 37-57 (LLGVAAAVVIGLFGFWRGLYF).

Belongs to the EccE family. In terms of assembly, part of the ESX-3 / type VII secretion system (T7SS), which is composed of cytosolic and membrane components. The ESX-3 membrane complex is composed of EccB3, EccC3, EccD3 and EccE3.

It localises to the cell inner membrane. In terms of biological role, part of the ESX-3 specialized secretion system, which is important for iron and zinc uptake or homeostasis. This Mycobacterium tuberculosis (strain CDC 1551 / Oshkosh) protein is ESX-3 secretion system protein EccE3.